The following is a 364-amino-acid chain: UDP-N-acetylglucosamine--N-acetylmuramyl-(pentapeptide) pyrophosphoryl-undecaprenol N-acetylglucosamine transferase (364 aa).

UDP-N-acetyl-alpha-D-glucosamine contacts are provided by residues 10–12 (TGG), asparagine 123, serine 198, isoleucine 251, and glutamine 296.

It belongs to the glycosyltransferase 28 family. MurG subfamily.

Its subcellular location is the cell membrane. The enzyme catalyses di-trans,octa-cis-undecaprenyl diphospho-N-acetyl-alpha-D-muramoyl-L-alanyl-D-glutamyl-meso-2,6-diaminopimeloyl-D-alanyl-D-alanine + UDP-N-acetyl-alpha-D-glucosamine = di-trans,octa-cis-undecaprenyl diphospho-[N-acetyl-alpha-D-glucosaminyl-(1-&gt;4)]-N-acetyl-alpha-D-muramoyl-L-alanyl-D-glutamyl-meso-2,6-diaminopimeloyl-D-alanyl-D-alanine + UDP + H(+). Its pathway is cell wall biogenesis; peptidoglycan biosynthesis. In terms of biological role, cell wall formation. Catalyzes the transfer of a GlcNAc subunit on undecaprenyl-pyrophosphoryl-MurNAc-pentapeptide (lipid intermediate I) to form undecaprenyl-pyrophosphoryl-MurNAc-(pentapeptide)GlcNAc (lipid intermediate II). The chain is UDP-N-acetylglucosamine--N-acetylmuramyl-(pentapeptide) pyrophosphoryl-undecaprenol N-acetylglucosamine transferase from Exiguobacterium sibiricum (strain DSM 17290 / CCUG 55495 / CIP 109462 / JCM 13490 / 255-15).